Here is a 354-residue protein sequence, read N- to C-terminus: S-adenosylmethionine:tRNA ribosyltransferase-isomerase (354 aa).

Belongs to the QueA family. As to quaternary structure, monomer.

The protein localises to the cytoplasm. The catalysed reaction is 7-aminomethyl-7-carbaguanosine(34) in tRNA + S-adenosyl-L-methionine = epoxyqueuosine(34) in tRNA + adenine + L-methionine + 2 H(+). Its pathway is tRNA modification; tRNA-queuosine biosynthesis. In terms of biological role, transfers and isomerizes the ribose moiety from AdoMet to the 7-aminomethyl group of 7-deazaguanine (preQ1-tRNA) to give epoxyqueuosine (oQ-tRNA). The sequence is that of S-adenosylmethionine:tRNA ribosyltransferase-isomerase from Pseudomonas syringae pv. tomato (strain ATCC BAA-871 / DC3000).